The primary structure comprises 553 residues: NADH-quinone oxidoreductase subunit M (553 aa).

The next 3 membrane-spanning stretches (helical) occupy residues 4 to 24, 34 to 54, and 84 to 104; these read VPWL…IILL, WAGM…AAEF, and IAVV…VAGW. Residues 113–135 form a disordered region; that stretch reads LSPASGRYPQRPAPPRLRSSGGE. The next 10 helical transmembrane spans lie at 140 to 160, 164 to 184, 197 to 217, 246 to 266, 316 to 336, 342 to 362, 371 to 391, 420 to 440, 447 to 467, and 492 to 512; these read VHAY…SVIA, LLFY…IGGF, FLLY…GLYV, AVFK…APLW, PLIV…AIGQ, LIAY…FVMT, LYML…GFLI, AMAT…LVLL, WLAA…MLWL, and IVVA…KPVL. The tract at residues 527–553 is disordered; that stretch reads GQHDPAPSVAHPVPAVGASRTAEGPHP. Low complexity predominate over residues 531-544; that stretch reads PAPSVAHPVPAVGA.

Belongs to the complex I subunit 4 family.

Its subcellular location is the cell membrane. The enzyme catalyses a quinone + NADH + 5 H(+)(in) = a quinol + NAD(+) + 4 H(+)(out). Its function is as follows. NDH-1 shuttles electrons from NADH, via FMN and iron-sulfur (Fe-S) centers, to quinones in the respiratory chain. The immediate electron acceptor for the enzyme in this species is believed to be menaquinone. Couples the redox reaction to proton translocation (for every two electrons transferred, four hydrogen ions are translocated across the cytoplasmic membrane), and thus conserves the redox energy in a proton gradient. The polypeptide is NADH-quinone oxidoreductase subunit M (nuoM) (Mycobacterium tuberculosis (strain CDC 1551 / Oshkosh)).